The primary structure comprises 293 residues: Ribosomal protein L11 methyltransferase (293 aa).

S-adenosyl-L-methionine contacts are provided by Thr-145, Gly-166, Asp-188, and Asn-230.

This sequence belongs to the methyltransferase superfamily. PrmA family.

It localises to the cytoplasm. It carries out the reaction L-lysyl-[protein] + 3 S-adenosyl-L-methionine = N(6),N(6),N(6)-trimethyl-L-lysyl-[protein] + 3 S-adenosyl-L-homocysteine + 3 H(+). Methylates ribosomal protein L11. This is Ribosomal protein L11 methyltransferase from Shigella sonnei (strain Ss046).